A 217-amino-acid chain; its full sequence is Probable GTP-binding protein EngB (217 aa).

The EngB-type G domain maps to aspartate 44–glutamate 217. GTP is bound by residues glycine 52 to serine 59, glycine 79 to glutamate 83, aspartate 97 to glycine 100, threonine 164 to aspartate 167, and threonine 198 to serine 200. Serine 59 and threonine 81 together coordinate Mg(2+).

Belongs to the TRAFAC class TrmE-Era-EngA-EngB-Septin-like GTPase superfamily. EngB GTPase family. Mg(2+) is required as a cofactor.

Functionally, necessary for normal cell division and for the maintenance of normal septation. The sequence is that of Probable GTP-binding protein EngB from Ruegeria pomeroyi (strain ATCC 700808 / DSM 15171 / DSS-3) (Silicibacter pomeroyi).